Here is a 435-residue protein sequence, read N- to C-terminus: Shikimate O-hydroxycinnamoyltransferase (435 aa).

Active-site proton acceptor residues include H153 and D382.

The protein belongs to the plant acyltransferase family. As to expression, highly expressed in stem vascular tissues.

It catalyses the reaction shikimate + 4-coumaroyl-CoA = trans-4-coumaroylshikimate + CoA. Functionally, acyltransferase involved in the biosynthesis of lignin. The affinity for shikimate as acceptor is 100-fold higher than for quinate. The most efficient donors are caffeoyl-CoA &gt; p-coumaroyl-CoA &gt; feruloyl-CoA &gt;&gt; sinapoyl-CoA. This Nicotiana tabacum (Common tobacco) protein is Shikimate O-hydroxycinnamoyltransferase (HST).